A 206-amino-acid chain; its full sequence is Imidazole glycerol phosphate synthase subunit HisH (206 aa).

A Glutamine amidotransferase type-1 domain is found at 1–206 (MIVIIDYGMG…LRILKNFGDM (206 aa)). The active-site Nucleophile is the cysteine 79. Catalysis depends on residues histidine 188 and glutamate 190.

In terms of assembly, heterodimer of HisH and HisF.

It is found in the cytoplasm. It catalyses the reaction 5-[(5-phospho-1-deoxy-D-ribulos-1-ylimino)methylamino]-1-(5-phospho-beta-D-ribosyl)imidazole-4-carboxamide + L-glutamine = D-erythro-1-(imidazol-4-yl)glycerol 3-phosphate + 5-amino-1-(5-phospho-beta-D-ribosyl)imidazole-4-carboxamide + L-glutamate + H(+). The catalysed reaction is L-glutamine + H2O = L-glutamate + NH4(+). Its pathway is amino-acid biosynthesis; L-histidine biosynthesis; L-histidine from 5-phospho-alpha-D-ribose 1-diphosphate: step 5/9. In terms of biological role, IGPS catalyzes the conversion of PRFAR and glutamine to IGP, AICAR and glutamate. The HisH subunit catalyzes the hydrolysis of glutamine to glutamate and ammonia as part of the synthesis of IGP and AICAR. The resulting ammonia molecule is channeled to the active site of HisF. This Syntrophotalea carbinolica (strain DSM 2380 / NBRC 103641 / GraBd1) (Pelobacter carbinolicus) protein is Imidazole glycerol phosphate synthase subunit HisH.